Reading from the N-terminus, the 180-residue chain is 3-hydroxyanthranilate 3,4-dioxygenase (180 aa).

R44 contacts O2. Fe cation contacts are provided by H48, E54, and H92. E54 contributes to the substrate binding site. Positions 96 and 106 each coordinate substrate. A divalent metal cation-binding residues include C121, C124, C158, and C161.

This sequence belongs to the 3-HAO family. The cofactor is Fe(2+).

The protein resides in the cytoplasm. The enzyme catalyses 3-hydroxyanthranilate + O2 = (2Z,4Z)-2-amino-3-carboxymuconate 6-semialdehyde. It functions in the pathway cofactor biosynthesis; NAD(+) biosynthesis; quinolinate from L-kynurenine: step 3/3. Functionally, catalyzes the oxidative ring opening of 3-hydroxyanthranilate to 2-amino-3-carboxymuconate semialdehyde, which spontaneously cyclizes to quinolinate. The sequence is that of 3-hydroxyanthranilate 3,4-dioxygenase (bna1) from Neurospora crassa (strain ATCC 24698 / 74-OR23-1A / CBS 708.71 / DSM 1257 / FGSC 987).